Reading from the N-terminus, the 156-residue chain is Small ribosomal subunit protein uS7 (156 aa).

It belongs to the universal ribosomal protein uS7 family. In terms of assembly, part of the 30S ribosomal subunit. Contacts proteins S9 and S11.

In terms of biological role, one of the primary rRNA binding proteins, it binds directly to 16S rRNA where it nucleates assembly of the head domain of the 30S subunit. Is located at the subunit interface close to the decoding center, probably blocks exit of the E-site tRNA. The protein is Small ribosomal subunit protein uS7 of Crocosphaera subtropica (strain ATCC 51142 / BH68) (Cyanothece sp. (strain ATCC 51142)).